A 252-amino-acid chain; its full sequence is Hydroxyacylglutathione hydrolase (252 aa).

Residues histidine 54, histidine 56, aspartate 58, histidine 59, histidine 111, aspartate 130, and histidine 170 each coordinate Zn(2+).

It belongs to the metallo-beta-lactamase superfamily. Glyoxalase II family. In terms of assembly, monomer. The cofactor is Zn(2+).

It carries out the reaction an S-(2-hydroxyacyl)glutathione + H2O = a 2-hydroxy carboxylate + glutathione + H(+). It functions in the pathway secondary metabolite metabolism; methylglyoxal degradation; (R)-lactate from methylglyoxal: step 2/2. Functionally, thiolesterase that catalyzes the hydrolysis of S-D-lactoyl-glutathione to form glutathione and D-lactic acid. The polypeptide is Hydroxyacylglutathione hydrolase (Francisella philomiragia subsp. philomiragia (strain ATCC 25017 / CCUG 19701 / FSC 153 / O#319-036)).